Reading from the N-terminus, the 273-residue chain is Undecaprenyl-diphosphatase (273 aa).

A run of 7 helical transmembrane segments spans residues 6–26 (SLLI…LPVS), 45–65 (AKTF…VMFW), 90–110 (LTLI…LLFH), 116–136 (LFNP…LIAA), 190–210 (YAAS…ATAL), 222–242 (GDIS…LIAI), and 252–272 (ISFI…YVVF).

The protein belongs to the UppP family.

It is found in the cell inner membrane. The catalysed reaction is di-trans,octa-cis-undecaprenyl diphosphate + H2O = di-trans,octa-cis-undecaprenyl phosphate + phosphate + H(+). Catalyzes the dephosphorylation of undecaprenyl diphosphate (UPP). Confers resistance to bacitracin. This is Undecaprenyl-diphosphatase from Shigella sonnei (strain Ss046).